The chain runs to 662 residues: Protein translocase subunit SecA 2 (662 aa).

ATP is bound by residues Q110, 128-132 (GEGKT), and D538.

The protein belongs to the SecA family. As to quaternary structure, monomer and homodimer. Part of the essential Sec protein translocation apparatus which comprises SecA, SecYEG and auxiliary proteins SecDF. Other proteins may also be involved.

Its subcellular location is the cell inner membrane. It is found in the cytoplasm. The enzyme catalyses ATP + H2O + cellular proteinSide 1 = ADP + phosphate + cellular proteinSide 2.. Part of the Sec protein translocase complex. Interacts with the SecYEG preprotein conducting channel. Has a central role in coupling the hydrolysis of ATP to the transfer of proteins into and across the cell membrane, serving as an ATP-driven molecular motor driving the stepwise translocation of polypeptide chains across the membrane. The protein is Protein translocase subunit SecA 2 of Chlorobium chlorochromatii (strain CaD3).